A 335-amino-acid chain; its full sequence is NADP(+)-dependent glycerol-3-phosphate dehydrogenase (335 aa).

Gly137 is a sn-glycerol 3-phosphate binding site. Position 141 (Ala141) interacts with NADPH. Positions 192, 250, 259, and 260 each coordinate sn-glycerol 3-phosphate. Catalysis depends on Lys192, which acts as the Proton acceptor. An NADPH-binding site is contributed by Arg259. 2 residues coordinate NADPH: Val287 and Glu289.

This sequence belongs to the NAD-dependent glycerol-3-phosphate dehydrogenase family. Homodimer.

It is found in the cytoplasm. The enzyme catalyses sn-glycerol 3-phosphate + NADP(+) = dihydroxyacetone phosphate + NADPH + H(+). In terms of biological role, catalyzes the reduction of the glycolytic intermediate dihydroxyacetone phosphate (DHAP) to sn-glycerol 3-phosphate (G3P). Shows a 15-fold preference for NADPH over NADH in the reduction process. Can also catalyze the reverse reaction in vitro. Shows no activity with dihydroxyacetone, glycerol, glycerol-2-phosphate, D-glyceraldehyde-3-phosphate, DL-glyceraldehyde, D-erythrose-4-phosphate, D-fructose-6-phosphate, beta-D-glucose-6-phosphate, or alpha-D-galactose-1-phosphate. In Archaeoglobus fulgidus (strain ATCC 49558 / DSM 4304 / JCM 9628 / NBRC 100126 / VC-16), this protein is NADP(+)-dependent glycerol-3-phosphate dehydrogenase.